We begin with the raw amino-acid sequence, 153 residues long: Large ribosomal subunit protein uL30 (153 aa).

Belongs to the universal ribosomal protein uL30 family. As to quaternary structure, part of the 50S ribosomal subunit.

The sequence is that of Large ribosomal subunit protein uL30 from Methanoculleus marisnigri (strain ATCC 35101 / DSM 1498 / JR1).